A 141-amino-acid polypeptide reads, in one-letter code: Nucleoside diphosphate kinase (141 aa).

Residues K11, F59, R87, T93, R104, and N114 each contribute to the ATP site. Residue H117 is the Pros-phosphohistidine intermediate of the active site.

The protein belongs to the NDK family. As to quaternary structure, homotetramer. Mg(2+) is required as a cofactor.

It is found in the cytoplasm. The catalysed reaction is a 2'-deoxyribonucleoside 5'-diphosphate + ATP = a 2'-deoxyribonucleoside 5'-triphosphate + ADP. It carries out the reaction a ribonucleoside 5'-diphosphate + ATP = a ribonucleoside 5'-triphosphate + ADP. Major role in the synthesis of nucleoside triphosphates other than ATP. The ATP gamma phosphate is transferred to the NDP beta phosphate via a ping-pong mechanism, using a phosphorylated active-site intermediate. The sequence is that of Nucleoside diphosphate kinase from Ralstonia pickettii (strain 12J).